The following is a 422-amino-acid chain: Enolase (422 aa).

Glutamine 162 contacts (2R)-2-phosphoglycerate. Glutamate 204 (proton donor) is an active-site residue. Positions 241, 284, and 311 each coordinate Mg(2+). (2R)-2-phosphoglycerate-binding residues include lysine 336, arginine 365, serine 366, and lysine 387. Residue lysine 336 is the Proton acceptor of the active site.

This sequence belongs to the enolase family. Mg(2+) is required as a cofactor.

Its subcellular location is the cytoplasm. The protein resides in the secreted. It localises to the cell surface. The enzyme catalyses (2R)-2-phosphoglycerate = phosphoenolpyruvate + H2O. The protein operates within carbohydrate degradation; glycolysis; pyruvate from D-glyceraldehyde 3-phosphate: step 4/5. In terms of biological role, catalyzes the reversible conversion of 2-phosphoglycerate (2-PG) into phosphoenolpyruvate (PEP). It is essential for the degradation of carbohydrates via glycolysis. This is Enolase from Bartonella quintana (strain Toulouse) (Rochalimaea quintana).